Consider the following 333-residue polypeptide: BRISC and BRCA1-A complex member 1 (333 aa).

M1 is modified (N-acetylmethionine). Residues 1–85 (MEVAEANSPT…PWQVPASASE (85 aa)) are disordered. S8 is modified (phosphoserine). Residues 10-24 (TEEEEEEEEEGEETI) show a composition bias toward acidic residues. Phosphoserine occurs at positions 33 and 53. The span at 58–67 (EAATADGGAA) shows a compositional bias: low complexity. Residues 99-302 (VIICLDLSEE…LELHNCMAKL (204 aa)) form a VWFA-like region.

The protein belongs to the BABAM1 family. As to quaternary structure, component of the ARISC complex, at least composed of UIMC1/RAP80, ABRAXAS1, BRCC3/BRCC36, BABAM2 and BABAM1/NBA1. Component of the BRCA1-A complex, at least composed of BRCA1, BARD1, UIMC1/RAP80, ABRAXAS1, BRCC3/BRCC36, BABAM2 and BABAM1/NBA1. In the BRCA1-A complex, interacts directly with ABRAXAS1 and BABAM2. Component of the BRISC complex, at least composed of ABRAXAS2, BRCC3/BRCC36, BABAM2 and BABAM1/NBA1. Identified in a complex with SHMT2 and the other subunits of the BRISC complex.

The protein localises to the cytoplasm. It is found in the nucleus. Functionally, component of the BRCA1-A complex, a complex that specifically recognizes 'Lys-63'-linked ubiquitinated histones H2A and H2AX at DNA lesions sites, leading to target the BRCA1-BARD1 heterodimer to sites of DNA damage at double-strand breaks (DSBs). The BRCA1-A complex also possesses deubiquitinase activity that specifically removes 'Lys-63'-linked ubiquitin on histones H2A and H2AX. In the BRCA1-A complex, it is required for the complex integrity and its localization at DSBs. Component of the BRISC complex, a multiprotein complex that specifically cleaves 'Lys-63'-linked ubiquitin in various substrates. In these 2 complexes, it is probably required to maintain the stability of BABAM2 and help the 'Lys-63'-linked deubiquitinase activity mediated by BRCC3/BRCC36 component. The BRISC complex is required for normal mitotic spindle assembly and microtubule attachment to kinetochores via its role in deubiquitinating NUMA1. Plays a role in interferon signaling via its role in the deubiquitination of the interferon receptor IFNAR1; deubiquitination increases IFNAR1 activity by enhancing its stability and cell surface expression. Down-regulates the response to bacterial lipopolysaccharide (LPS) via its role in IFNAR1 deubiquitination. The sequence is that of BRISC and BRCA1-A complex member 1 (Babam1) from Mus musculus (Mouse).